Consider the following 428-residue polypeptide: 5-methylthioadenosine/S-adenosylhomocysteine deaminase (428 aa).

Zn(2+)-binding residues include histidine 65 and histidine 67. The substrate site is built by glutamate 94, arginine 158, and histidine 184. Histidine 211 serves as a coordination point for Zn(2+). Substrate-binding residues include glutamate 214 and aspartate 299. A Zn(2+)-binding site is contributed by aspartate 299.

Belongs to the metallo-dependent hydrolases superfamily. MTA/SAH deaminase family. It depends on Zn(2+) as a cofactor.

It carries out the reaction S-adenosyl-L-homocysteine + H2O + H(+) = S-inosyl-L-homocysteine + NH4(+). It catalyses the reaction S-methyl-5'-thioadenosine + H2O + H(+) = S-methyl-5'-thioinosine + NH4(+). Functionally, catalyzes the deamination of 5-methylthioadenosine and S-adenosyl-L-homocysteine into 5-methylthioinosine and S-inosyl-L-homocysteine, respectively. Is also able to deaminate adenosine. The sequence is that of 5-methylthioadenosine/S-adenosylhomocysteine deaminase from Moorella thermoacetica (strain ATCC 39073 / JCM 9320).